Consider the following 222-residue polypeptide: Phosphoribosylformylglycinamidine synthase subunit PurQ (222 aa).

Residues 3-222 (AAVVVFPGSN…RALAGALTPA (220 aa)) form the Glutamine amidotransferase type-1 domain. The active-site Nucleophile is Cys-86. Active-site residues include His-194 and Glu-196.

Part of the FGAM synthase complex composed of 1 PurL, 1 PurQ and 2 PurS subunits.

The protein localises to the cytoplasm. It carries out the reaction N(2)-formyl-N(1)-(5-phospho-beta-D-ribosyl)glycinamide + L-glutamine + ATP + H2O = 2-formamido-N(1)-(5-O-phospho-beta-D-ribosyl)acetamidine + L-glutamate + ADP + phosphate + H(+). The enzyme catalyses L-glutamine + H2O = L-glutamate + NH4(+). It participates in purine metabolism; IMP biosynthesis via de novo pathway; 5-amino-1-(5-phospho-D-ribosyl)imidazole from N(2)-formyl-N(1)-(5-phospho-D-ribosyl)glycinamide: step 1/2. In terms of biological role, part of the phosphoribosylformylglycinamidine synthase complex involved in the purines biosynthetic pathway. Catalyzes the ATP-dependent conversion of formylglycinamide ribonucleotide (FGAR) and glutamine to yield formylglycinamidine ribonucleotide (FGAM) and glutamate. The FGAM synthase complex is composed of three subunits. PurQ produces an ammonia molecule by converting glutamine to glutamate. PurL transfers the ammonia molecule to FGAR to form FGAM in an ATP-dependent manner. PurS interacts with PurQ and PurL and is thought to assist in the transfer of the ammonia molecule from PurQ to PurL. The polypeptide is Phosphoribosylformylglycinamidine synthase subunit PurQ (Ruegeria pomeroyi (strain ATCC 700808 / DSM 15171 / DSS-3) (Silicibacter pomeroyi)).